The primary structure comprises 378 residues: Carbamoyl phosphate synthase small chain (378 aa).

Positions 1–189 (MTKPAILALA…DSHPEIPAGE (189 aa)) are CPSase. L-glutamine-binding residues include S47, G241, and G243. The Glutamine amidotransferase type-1 domain maps to 193 to 378 (HVVAYDYGVK…RFISAMAERR (186 aa)). Catalysis depends on C269, which acts as the Nucleophile. The L-glutamine site is built by L270, Q273, N311, G313, and F314. Residues H353 and E355 contribute to the active site.

It belongs to the CarA family. Composed of two chains; the small (or glutamine) chain promotes the hydrolysis of glutamine to ammonia, which is used by the large (or ammonia) chain to synthesize carbamoyl phosphate. Tetramer of heterodimers (alpha,beta)4.

It catalyses the reaction hydrogencarbonate + L-glutamine + 2 ATP + H2O = carbamoyl phosphate + L-glutamate + 2 ADP + phosphate + 2 H(+). The enzyme catalyses L-glutamine + H2O = L-glutamate + NH4(+). The protein operates within amino-acid biosynthesis; L-arginine biosynthesis; carbamoyl phosphate from bicarbonate: step 1/1. It participates in pyrimidine metabolism; UMP biosynthesis via de novo pathway; (S)-dihydroorotate from bicarbonate: step 1/3. Its function is as follows. Small subunit of the glutamine-dependent carbamoyl phosphate synthetase (CPSase). CPSase catalyzes the formation of carbamoyl phosphate from the ammonia moiety of glutamine, carbonate, and phosphate donated by ATP, constituting the first step of 2 biosynthetic pathways, one leading to arginine and/or urea and the other to pyrimidine nucleotides. The small subunit (glutamine amidotransferase) binds and cleaves glutamine to supply the large subunit with the substrate ammonia. The chain is Carbamoyl phosphate synthase small chain from Pseudomonas aeruginosa (strain ATCC 15692 / DSM 22644 / CIP 104116 / JCM 14847 / LMG 12228 / 1C / PRS 101 / PAO1).